Consider the following 1120-residue polypeptide: Putative GTPase-activating protein AN11010 (1120 aa).

Residues 291–479 form the Rab-GAP TBC domain; sequence GLPNRLRGEI…RVLDVFFLEG (189 aa). 5 disordered regions span residues 673-702, 859-903, 960-979, 1017-1068, and 1081-1120; these read DSPG…PSPA, DEVK…PNNP, AAKQ…SGGI, RNAL…ETDR, and GKDD…EFES. Residues 864-878 are compositionally biased toward low complexity; sequence ESTPSPEGETPGTPS. Over residues 960 to 970 the composition is skewed to polar residues; that stretch reads AAKQQPTSSGP. The span at 1023-1032 shows a compositional bias: acidic residues; that stretch reads DDDDEDDEDD. Basic and acidic residues-rich tracts occupy residues 1057–1068 and 1081–1095; these read DPERRSVRETDR and GKDD…DSHQ.

The protein is Putative GTPase-activating protein AN11010 of Emericella nidulans (strain FGSC A4 / ATCC 38163 / CBS 112.46 / NRRL 194 / M139) (Aspergillus nidulans).